Consider the following 356-residue polypeptide: 3-isopropylmalate dehydrogenase (356 aa).

R90, R100, R128, and D222 together coordinate substrate. 3 residues coordinate Mg(2+): D222, D246, and D250. 280–292 (GSAPDIAGKGVAN) is an NAD(+) binding site.

It belongs to the isocitrate and isopropylmalate dehydrogenases family. LeuB type 1 subfamily. In terms of assembly, homodimer. The cofactor is Mg(2+). Mn(2+) is required as a cofactor.

It is found in the cytoplasm. It carries out the reaction (2R,3S)-3-isopropylmalate + NAD(+) = 4-methyl-2-oxopentanoate + CO2 + NADH. It participates in amino-acid biosynthesis; L-leucine biosynthesis; L-leucine from 3-methyl-2-oxobutanoate: step 3/4. Its function is as follows. Catalyzes the oxidation of 3-carboxy-2-hydroxy-4-methylpentanoate (3-isopropylmalate) to 3-carboxy-4-methyl-2-oxopentanoate. The product decarboxylates to 4-methyl-2 oxopentanoate. This chain is 3-isopropylmalate dehydrogenase, found in Albidiferax ferrireducens (strain ATCC BAA-621 / DSM 15236 / T118) (Rhodoferax ferrireducens).